The following is a 126-amino-acid chain: Holo-[acyl-carrier-protein] synthase (126 aa).

Residues Asp9 and Glu58 each contribute to the Mg(2+) site.

Belongs to the P-Pant transferase superfamily. AcpS family. The cofactor is Mg(2+).

It is found in the cytoplasm. The enzyme catalyses apo-[ACP] + CoA = holo-[ACP] + adenosine 3',5'-bisphosphate + H(+). In terms of biological role, transfers the 4'-phosphopantetheine moiety from coenzyme A to a Ser of acyl-carrier-protein. This chain is Holo-[acyl-carrier-protein] synthase, found in Yersinia pseudotuberculosis serotype I (strain IP32953).